A 33-amino-acid chain; its full sequence is Unknown 31.6 kDa protein from 2D-PAGE (33 aa).

The polypeptide is Unknown 31.6 kDa protein from 2D-PAGE (Onion yellows phytoplasma).